The chain runs to 417 residues: Serine hydroxymethyltransferase 2 (417 aa).

(6S)-5,6,7,8-tetrahydrofolate-binding positions include Leu121 and 125–127 (GHL). An N6-(pyridoxal phosphate)lysine modification is found at Lys229. A (6S)-5,6,7,8-tetrahydrofolate-binding site is contributed by 354 to 356 (SPF).

Belongs to the SHMT family. As to quaternary structure, homodimer. Pyridoxal 5'-phosphate serves as cofactor.

It localises to the cytoplasm. It carries out the reaction (6R)-5,10-methylene-5,6,7,8-tetrahydrofolate + glycine + H2O = (6S)-5,6,7,8-tetrahydrofolate + L-serine. Its pathway is one-carbon metabolism; tetrahydrofolate interconversion. The protein operates within amino-acid biosynthesis; glycine biosynthesis; glycine from L-serine: step 1/1. Its function is as follows. Catalyzes the reversible interconversion of serine and glycine with tetrahydrofolate (THF) serving as the one-carbon carrier. This reaction serves as the major source of one-carbon groups required for the biosynthesis of purines, thymidylate, methionine, and other important biomolecules. Also exhibits THF-independent aldolase activity toward beta-hydroxyamino acids, producing glycine and aldehydes, via a retro-aldol mechanism. The protein is Serine hydroxymethyltransferase 2 of Pseudomonas fluorescens (strain Pf0-1).